Here is a 407-residue protein sequence, read N- to C-terminus: Multifunctional CCA protein (407 aa).

Residues G8 and R11 each contribute to the ATP site. G8 and R11 together coordinate CTP. The Mg(2+) site is built by D21 and D23. R91, R137, and R140 together coordinate ATP. CTP-binding residues include R91, R137, and R140. The HD domain maps to T228 to W329.

Belongs to the tRNA nucleotidyltransferase/poly(A) polymerase family. Bacterial CCA-adding enzyme type 1 subfamily. In terms of assembly, monomer. Can also form homodimers and oligomers. The cofactor is Mg(2+). Ni(2+) is required as a cofactor.

The catalysed reaction is a tRNA precursor + 2 CTP + ATP = a tRNA with a 3' CCA end + 3 diphosphate. It carries out the reaction a tRNA with a 3' CCA end + 2 CTP + ATP = a tRNA with a 3' CCACCA end + 3 diphosphate. In terms of biological role, catalyzes the addition and repair of the essential 3'-terminal CCA sequence in tRNAs without using a nucleic acid template. Adds these three nucleotides in the order of C, C, and A to the tRNA nucleotide-73, using CTP and ATP as substrates and producing inorganic pyrophosphate. tRNA 3'-terminal CCA addition is required both for tRNA processing and repair. Also involved in tRNA surveillance by mediating tandem CCA addition to generate a CCACCA at the 3' terminus of unstable tRNAs. While stable tRNAs receive only 3'-terminal CCA, unstable tRNAs are marked with CCACCA and rapidly degraded. This Vibrio vulnificus (strain CMCP6) protein is Multifunctional CCA protein.